The chain runs to 226 residues: Lysoplasmalogenase TMEM86B (226 aa).

The Cytoplasmic portion of the chain corresponds to 1–23; the sequence is MDARKEGLPLETLFSDQYPQVRR. Residues 24 to 40 form a helical membrane-spanning segment; that stretch reads WLAPFILACSLYFLLWI. The Extracellular portion of the chain corresponds to 41–46; it reads PVDQPS. The chain crosses the membrane as a helical span at residues 47 to 68; that stretch reads WVSALIKCQPILCLVVFLWAVA. At 69 to 74 the chain is on the cytoplasmic side; sequence PGGSST. A helical transmembrane segment spans residues 75-93; sequence WLLQGALVCSAVGDACLIW. The Extracellular segment spans residues 94-99; that stretch reads PEAFFY. A helical membrane pass occupies residues 100–117; that stretch reads GTAAFSVAHLFYLGAFGL. Residues 118-123 lie on the Cytoplasmic side of the membrane; sequence TPLQPG. The helical transmembrane segment at 124-140 threads the bilayer; it reads LLLCTTLASLTYYSFLL. Over 141-146 the chain is Extracellular; sequence LHLEQG. The chain crosses the membrane as a helical span at residues 147–163; it reads MVLPVMAYGLILNSMLW. Over 164–171 the chain is Cytoplasmic; sequence RSLVWGGS. The chain crosses the membrane as a helical span at residues 172 to 188; it reads ASWGAVLFTFSDGVLAW. Topologically, residues 189–199 are extracellular; sequence DTFVYSLPFAR. The chain crosses the membrane as a helical span at residues 200–218; the sequence is LVTMSTYYAAQLLLILSAL. Topologically, residues 219–226 are cytoplasmic; sequence RNPGLKTH.

The protein belongs to the TMEM86 family. Homodimer. Enriched in liver. Also detected in brain and testis.

It localises to the endoplasmic reticulum membrane. The protein resides in the cytoplasm. It carries out the reaction a 1-O-(1Z-alkenyl)-sn-glycero-3-phosphocholine + H2O = a 2,3-saturated aldehyde + sn-glycerol 3-phosphocholine. It catalyses the reaction a 1-O-(1Z-alkenyl)-sn-glycero-3-phosphoethanolamine + H2O = a 2,3-saturated aldehyde + sn-glycero-3-phosphoethanolamine. With respect to regulation, competitively inhibited by lysophosphatidic acid. In terms of biological role, catalyzes the hydrolysis of the vinyl ether bond of choline or ethanolamine lysoplasmalogens, forming fatty aldehyde and glycerophosphocholine or glycerophosphoethanolamine, respectively and is specific for the sn-2-deacylated (lyso) form of plasmalogen. This Mus musculus (Mouse) protein is Lysoplasmalogenase TMEM86B (Tmem86b).